Consider the following 141-residue polypeptide: HTH-type transcriptional repressor NsrR (141 aa).

An HTH rrf2-type domain is found at 2-129; that stretch reads QLTSFTDYGL…DNYTLADLVE (128 aa). Residues 28–51 constitute a DNA-binding region (H-T-H motif); that stretch reads ISEVTEVYGVSRNHMVKIINQLSR. Positions 91, 96, and 102 each coordinate [2Fe-2S] cluster.

[2Fe-2S] cluster is required as a cofactor.

In terms of biological role, nitric oxide-sensitive repressor of genes involved in protecting the cell against nitrosative stress. May require iron for activity. This chain is HTH-type transcriptional repressor NsrR, found in Klebsiella pneumoniae subsp. pneumoniae (strain ATCC 700721 / MGH 78578).